The sequence spans 269 residues: Interleukin-1 beta (269 aa).

Positions 1–116 (MAEVPELASE…TWDNEAYVHD (116 aa)) are cleaved as a propeptide — removed in mature form; by CASP1. Residues 228 to 241 (FESAQFPNWYISTS) carry the Involved in interaction with TMED10 C-terminus motif.

The protein belongs to the IL-1 family. As to quaternary structure, monomer. In its precursor form, weakly interacts with full-length MEFV; the mature cytokine does not interact at all. Interacts with integrins ITGAV:ITGBV and ITGA5:ITGB1; integrin-binding is required for IL1B signaling. Interacts with cargo receptor TMED10; the interaction is direct and is required for the secretion of IL1B mature form. Interacts with HSP90AB1; the interaction facilitates cargo translocation into the ERGIC. Interacts with HSP90B1; the interaction facilitates cargo translocation into the ERGIC. In terms of processing, activation of the IL1B precursor involves a CASP1-catalyzed proteolytic cleavage. Processing and secretion are temporarily associated. Post-translationally, (Microbial infection) Cleavage by S.pyogenes cysteine protease SpeB promotes its activation independently of CASP1. As to expression, expressed in activated monocytes/macrophages (at protein level).

Its subcellular location is the cytoplasm. It is found in the cytosol. It localises to the secreted. The protein resides in the lysosome. The protein localises to the extracellular exosome. With respect to regulation, (Microbial infection) Cleavage by S.pyogenes cysteine protease SpeB promotes its activation independently of CASP1. SpeB-mediated maturation of IL1B plays a dual role depending on infection site: while IL1B inflammatory response prevents bacterial growth during invasive skin infections, it promotes streptococcal infection of the nasopharynx by disrupting colonization resistance mediated by the microbiota. Its function is as follows. Potent pro-inflammatory cytokine. Initially discovered as the major endogenous pyrogen, induces prostaglandin synthesis, neutrophil influx and activation, T-cell activation and cytokine production, B-cell activation and antibody production, and fibroblast proliferation and collagen production. Promotes Th17 differentiation of T-cells. Synergizes with IL12/interleukin-12 to induce IFNG synthesis from T-helper 1 (Th1) cells. Plays a role in angiogenesis by inducing VEGF production synergistically with TNF and IL6. Involved in transduction of inflammation downstream of pyroptosis: its mature form is specifically released in the extracellular milieu by passing through the gasdermin-D (GSDMD) pore. Acts as a sensor of S.pyogenes infection in skin: cleaved and activated by pyogenes SpeB protease, leading to an inflammatory response that prevents bacterial growth during invasive skin infection. The polypeptide is Interleukin-1 beta (Homo sapiens (Human)).